Consider the following 418-residue polypeptide: Serine hydroxymethyltransferase (418 aa).

(6S)-5,6,7,8-tetrahydrofolate-binding positions include Leu-121 and 125 to 127; that span reads GHL. Residue Lys-230 is modified to N6-(pyridoxal phosphate)lysine. 355 to 357 is a binding site for (6S)-5,6,7,8-tetrahydrofolate; it reads SPF.

Belongs to the SHMT family. Homodimer. Pyridoxal 5'-phosphate serves as cofactor.

It localises to the cytoplasm. It carries out the reaction (6R)-5,10-methylene-5,6,7,8-tetrahydrofolate + glycine + H2O = (6S)-5,6,7,8-tetrahydrofolate + L-serine. It functions in the pathway one-carbon metabolism; tetrahydrofolate interconversion. It participates in amino-acid biosynthesis; glycine biosynthesis; glycine from L-serine: step 1/1. In terms of biological role, catalyzes the reversible interconversion of serine and glycine with tetrahydrofolate (THF) serving as the one-carbon carrier. This reaction serves as the major source of one-carbon groups required for the biosynthesis of purines, thymidylate, methionine, and other important biomolecules. Also exhibits THF-independent aldolase activity toward beta-hydroxyamino acids, producing glycine and aldehydes, via a retro-aldol mechanism. This chain is Serine hydroxymethyltransferase, found in Streptococcus pyogenes serotype M3 (strain ATCC BAA-595 / MGAS315).